The sequence spans 505 residues: Histidine ammonia-lyase (505 aa).

The segment at residues 141–143 is a cross-link (5-imidazolinone (Ala-Gly)); that stretch reads ASG. Position 142 is a 2,3-didehydroalanine (Ser) (Ser-142).

Belongs to the PAL/histidase family. Contains an active site 4-methylidene-imidazol-5-one (MIO), which is formed autocatalytically by cyclization and dehydration of residues Ala-Ser-Gly.

It localises to the cytoplasm. It catalyses the reaction L-histidine = trans-urocanate + NH4(+). Its pathway is amino-acid degradation; L-histidine degradation into L-glutamate; N-formimidoyl-L-glutamate from L-histidine: step 1/3. The polypeptide is Histidine ammonia-lyase (Bacillus thuringiensis subsp. konkukian (strain 97-27)).